The chain runs to 24 residues: Brevinin-1Bc (24 aa).

Cys-18 and Cys-24 are oxidised to a cystine.

As to expression, expressed by the skin glands.

It localises to the secreted. In terms of biological role, antibacterial activity against Gram-positive bacterium S.aureus. This chain is Brevinin-1Bc, found in Lithobates berlandieri (Rio Grande leopard frog).